The primary structure comprises 352 residues: 4-hydroxy-2-oxovalerate aldolase 4 (352 aa).

The Pyruvate carboxyltransferase domain maps to 9 to 261; sequence IRVTDSSLRD…RTGIDTLKII (253 aa). 17–18 is a substrate binding site; sequence RD. Aspartate 18 serves as a coordination point for Mn(2+). The active-site Proton acceptor is the histidine 21. Residues serine 171 and histidine 200 each coordinate substrate. Residues histidine 200 and histidine 202 each contribute to the Mn(2+) site. Tyrosine 291 is a binding site for substrate.

This sequence belongs to the 4-hydroxy-2-oxovalerate aldolase family.

The enzyme catalyses (S)-4-hydroxy-2-oxopentanoate = acetaldehyde + pyruvate. This Rhodococcus jostii (strain RHA1) protein is 4-hydroxy-2-oxovalerate aldolase 4.